Reading from the N-terminus, the 604-residue chain is Prostaglandin G/H synthase 2 (604 aa).

A signal peptide spans 1–17 (MLFRAVLLCAALGLSQA). In terms of domain architecture, EGF-like spans 18 to 55 (ANPCCSNPCQNRGECMSTGFDQYKCDCTRTGFYGENCT). Disulfide bonds link cysteine 21-cysteine 32, cysteine 22-cysteine 145, cysteine 26-cysteine 42, and cysteine 44-cysteine 54. Asparagine 53 carries N-linked (GlcNAc...) asparagine glycosylation. A substrate-binding site is contributed by arginine 106. N-linked (GlcNAc...) asparagine glycosylation occurs at asparagine 130. Residue histidine 193 is the Proton acceptor of the active site. Tyrosine 341 is a substrate binding site. The active-site For cyclooxygenase activity is tyrosine 371. Heme b is bound at residue histidine 374. N-linked (GlcNAc...) asparagine glycosylation occurs at asparagine 396. Cysteine 526 is subject to S-nitrosocysteine. Cysteine 555 and cysteine 561 are joined by a disulfide. O-acetylserine; by SPHK1 is present on serine 565. Asparagine 580 carries N-linked (GlcNAc...) asparagine glycosylation.

It belongs to the prostaglandin G/H synthase family. In terms of assembly, homodimer. Requires heme b as cofactor. In terms of processing, S-nitrosylation by NOS2 (iNOS) activates enzyme activity. S-nitrosylation may take place on different Cys residues in addition to Cys-526. Post-translationally, acetylated at Ser-565 by SPHK1. During neuroinflammation, acetylation by SPHK1 promotes neuronal secretion of specialized preresolving mediators (SPMs), especially 15-R-lipoxin A4, which results in an increase of phagocytic microglia. Following colon injury, expressed in the wound bed mesenchyme during the first phase of repair, probably by colonic mesenchymal stem cells (at protein level).

The protein localises to the microsome membrane. It localises to the endoplasmic reticulum membrane. The protein resides in the nucleus inner membrane. Its subcellular location is the nucleus outer membrane. The catalysed reaction is (5Z,8Z,11Z,14Z)-eicosatetraenoate + AH2 + 2 O2 = prostaglandin H2 + A + H2O. It catalyses the reaction (5Z,8Z,11Z,14Z)-eicosatetraenoate + 2 O2 = prostaglandin G2. The enzyme catalyses prostaglandin G2 + AH2 = prostaglandin H2 + A + H2O. It carries out the reaction (5Z,8Z,11Z,14Z,17Z)-eicosapentaenoate + 2 O2 = prostaglandin G3. The catalysed reaction is prostaglandin G3 + AH2 = prostaglandin H3 + A + H2O. It catalyses the reaction (8Z,11Z,14Z)-eicosatrienoate + 2 O2 = prostaglandin G1. The enzyme catalyses prostaglandin G1 + AH2 = prostaglandin H1 + A + H2O. It carries out the reaction 2-(5Z,8Z,11Z,14Z)-eicosatetraenoyl-sn-glycero-3-phosphoethanolamine + 2 O2 = 2-(prostaglandin G2)-sn-glycero-3-phosphoethanolamine. The catalysed reaction is 2-(prostaglandin G2)-sn-glycero-3-phosphoethanolamine + AH2 = 2-(prostaglandin H2)-sn-glycero-3-phosphoethanolamine + A + H2O. It catalyses the reaction 2-(5Z,8Z,11Z,14Z)-eicosatetraenoyl-sn-glycero-3-phosphocholine + 2 O2 = 2-(prostaglandin G2)-sn-glycero-3-phosphocholine. The enzyme catalyses 2-(prostaglandin G2)-sn-glycero-3-phosphocholine + AH2 = 2-(prostaglandin H2)-sn-glycero-3-phosphocholine + A + H2O. It carries out the reaction (15S)-hydroperoxy-(5Z,8Z,11Z,13E)-eicosatetraenoate + AH2 = (15S)-hydroxy-(5Z,8Z,11Z,13E)-eicosatetraenoate + A + H2O. The catalysed reaction is 2-(5Z,8Z,11Z,14Z)-eicosatetraenoyl-sn-glycero-3-phosphocholine + AH2 + O2 = 2-[(15S)-hydroxy-(5Z,8Z,11Z,13E)-eicosatetraenoyl]-sn-glycero-3-phosphocholine + A + H2O. It catalyses the reaction 2-(5Z,8Z,11Z,14Z)-eicosatetraenoyl-sn-glycero-3-phosphocholine + AH2 + O2 = 2-[(15R)-hydroxy-(5Z,8Z,11Z,13E)-eicosatetraenoyl]-sn-glycero-3-phosphocholine + A + H2O. The enzyme catalyses 2-(5Z,8Z,11Z,14Z)-eicosatetraenoyl-sn-glycero-3-phosphocholine + AH2 + O2 = 2-[(11R)-hydroxy-(5Z,8Z,12E,14Z)-eicosatetraenoyl]-sn-glycero-3-phosphocholine + A + H2O. It carries out the reaction (9Z,12Z)-octadecadienoate + AH2 + O2 = 9-hydroxy-(10E,12Z)-octadecadienoate + A + H2O. The catalysed reaction is (9Z,12Z)-octadecadienoate + AH2 + O2 = 13-hydroxy-(9Z,11E)-octadecadienoate + A + H2O. It catalyses the reaction (5Z,8Z,11Z,14Z)-eicosatetraenoate + AH2 + O2 = (15R)-hydroxy-(5Z,8Z,11Z,13E)-eicosatetraenoate + A + H2O. The enzyme catalyses (5Z,8Z,11Z,14Z)-eicosatetraenoate + AH2 + O2 = (11R)-hydroxy-(5Z,8Z,12E,14Z)-eicosatetraenoate + A + H2O. It carries out the reaction (5Z,8Z,11Z,14Z,17Z)-eicosapentaenoate + AH2 + O2 = (11R)-hydroxy-(5Z,8Z,12E,14Z,17Z)-eicosapentaenoate + A + H2O. The catalysed reaction is (5Z,8Z,11Z,14Z,17Z)-eicosapentaenoate + AH2 + O2 = (18S)-hydroxy-(5Z,8Z,11Z,14Z,16E)-eicosapentaenoate + A + H2O. It catalyses the reaction (5Z,8Z,11Z,14Z,17Z)-eicosapentaenoate + AH2 + O2 = (18R)-hydroxy-(5Z,8Z,11Z,14Z,16E)-eicosapentaenoate + A + H2O. The enzyme catalyses (5Z,8Z,11Z,14Z,17Z)-eicosapentaenoate + AH2 + O2 = (15R)-hydroxy-(5Z,8Z,11Z,13E,17Z)-eicosapentaenoate + A + H2O. It carries out the reaction (5Z,8Z,11Z,14Z,17Z)-eicosapentaenoate + AH2 + O2 = (15S)-hydroxy-(5Z,8Z,11Z,13E,17Z)-eicosapentaenoate + A + H2O. The catalysed reaction is (7Z,10Z,13Z,16Z,19Z)-docosapentaenoate + AH2 + O2 = 13R-hydroxy-(7Z,10Z,14E,16Z,19Z)-docosapentaenoate + A + H2O. It catalyses the reaction (4Z,7Z,10Z,13Z,16Z,19Z)-docosahexaenoate + AH2 + O2 = 13-hydroxy-(4Z,7Z,10Z,14E,16Z,19Z)-docosahexaenoate + A + H2O. The enzyme catalyses (5S)-hydroxy-(6E,8Z,11Z,14Z)-eicosatetraenoate + AH2 + O2 = (5S,15R)-dihydroxy-(6E,8Z,11Z,13E)-eicosatetraenoate + A + H2O. It carries out the reaction (4Z,7Z,10Z,13Z,16Z,19Z)-docosahexaenoate + AH2 + O2 = 17R-hydroxy-(4Z,7Z,10Z,13Z,15E,19Z)-docosahexaenoate + A + H2O. The catalysed reaction is (5S)-hydroxy-(6E,8Z,11Z,14Z)-eicosatetraenoate + AH2 + O2 = (5S,15S)-dihydroxy-(6E,8Z,11Z,13E)-eicosatetraenoate + A + H2O. It catalyses the reaction (5S)-hydroxy-(6E,8Z,11Z,14Z)-eicosatetraenoate + AH2 + O2 = (5S,11R)-dihydroxy-(6E,8Z,12E,14Z)-eicosatetraenoate + A + H2O. The enzyme catalyses 2-(5Z,8Z,11Z,14Z-eicosatetraenoyl)-glycerol + 2 O2 = 2-glyceryl-prostaglandin G2. It carries out the reaction 2-glyceryl-prostaglandin G2 + AH2 = 2-glyceryl-prostaglandin H2 + A + H2O. The catalysed reaction is (5Z,8Z,11Z,14Z)-eicosatetraenoate + O2 = (15R)-hydroperoxy-(5Z,8Z,11Z,13E)-eicosatetraenoate. It catalyses the reaction (5Z,8Z,11Z,14Z)-eicosatetraenoate + O2 = 11R-hydroperoxy-(5Z,8Z,12E,14Z)-eicosatetraenoate. The enzyme catalyses (9Z,12Z)-octadecadienoate + AH2 + O2 = (9R)-hydroxy-(10E,12Z)-octadecadienoate + A + H2O. It carries out the reaction (9Z,12Z)-octadecadienoate + AH2 + O2 = (9S)-hydroxy-(10E,12Z)-octadecadienoate + A + H2O. The catalysed reaction is (9Z,12Z)-octadecadienoate + AH2 + O2 = (13S)-hydroxy-(9Z,11E)-octadecadienoate + A + H2O. It catalyses the reaction (9Z,12Z)-octadecadienoate + AH2 + O2 = (13R)-hydroxy-(9Z,11E)-octadecadienoate + A + H2O. Its pathway is lipid metabolism; prostaglandin biosynthesis. Its activity is regulated as follows. Inhibited by the nonsteroidal anti-inflammatory drugs aspirin, naproxen, diclofenac, meclofenamic acid, indomethacin and their analogs. Its function is as follows. Dual cyclooxygenase and peroxidase in the biosynthesis pathway of prostanoids, a class of C20 oxylipins mainly derived from arachidonate, with a particular role in the inflammatory response. The cyclooxygenase activity oxygenates arachidonate (AA, C20:4(n-6)) to the hydroperoxy endoperoxide prostaglandin G2 (PGG2), and the peroxidase activity reduces PGG2 to the hydroxy endoperoxide PGH2, the precursor of all 2-series prostaglandins and thromboxanes. This complex transformation is initiated by abstraction of hydrogen at carbon 13 (with S-stereochemistry), followed by insertion of molecular O2 to form the endoperoxide bridge between carbon 9 and 11 that defines prostaglandins. The insertion of a second molecule of O2 (bis-oxygenase activity) yields a hydroperoxy group in PGG2 that is then reduced to PGH2 by two electrons. Similarly catalyzes successive cyclooxygenation and peroxidation of dihomo-gamma-linoleate (DGLA, C20:3(n-6)) and eicosapentaenoate (EPA, C20:5(n-3)) to corresponding PGH1 and PGH3, the precursors of 1- and 3-series prostaglandins. In an alternative pathway of prostanoid biosynthesis, converts 2-arachidonoyl lysophopholipids to prostanoid lysophopholipids, which are then hydrolyzed by intracellular phospholipases to release free prostanoids. Metabolizes 2-arachidonoyl glycerol yielding the glyceryl ester of PGH2, a process that can contribute to pain response. Generates lipid mediators from n-3 and n-6 polyunsaturated fatty acids (PUFAs) via a lipoxygenase-type mechanism. Oxygenates PUFAs to hydroperoxy compounds and then reduces them to corresponding alcohols. Plays a role in the generation of resolution phase interaction products (resolvins) during both sterile and infectious inflammation. Metabolizes docosahexaenoate (DHA, C22:6(n-3)) to 17R-HDHA, a precursor of the D-series resolvins (RvDs). As a component of the biosynthetic pathway of E-series resolvins (RvEs), converts eicosapentaenoate (EPA, C20:5(n-3)) primarily to 18S-HEPE that is further metabolized by ALOX5 and LTA4H to generate 18S-RvE1 and 18S-RvE2. In vascular endothelial cells, converts docosapentaenoate (DPA, C22:5(n-3)) to 13R-HDPA, a precursor for 13-series resolvins (RvTs) shown to activate macrophage phagocytosis during bacterial infection. In activated leukocytes, contributes to oxygenation of hydroxyeicosatetraenoates (HETE) to diHETES (5,15-diHETE and 5,11-diHETE). Can also use linoleate (LA, (9Z,12Z)-octadecadienoate, C18:2(n-6)) as substrate and produce hydroxyoctadecadienoates (HODEs) in a regio- and stereospecific manner, being (9R)-HODE ((9R)-hydroxy-(10E,12Z)-octadecadienoate) and (13S)-HODE ((13S)-hydroxy-(9Z,11E)-octadecadienoate) its major products. During neuroinflammation, plays a role in neuronal secretion of specialized preresolving mediators (SPMs) 15R-lipoxin A4 that regulates phagocytic microglia. The protein is Prostaglandin G/H synthase 2 of Mus musculus (Mouse).